A 367-amino-acid chain; its full sequence is Nociceptin receptor (367 aa).

At 1-45 (MESLFPAPFWEVLYGSHFQGNLSLLNETVPHHLLLNASHSAFLPL) the chain is on the extracellular side. N21, N26, and N36 each carry an N-linked (GlcNAc...) asparagine glycan. Residues 46–71 (GLKVTIVGLYLAVCIGGLLGNCLVMY) traverse the membrane as a helical segment. Over 72-84 (VILRHTKMKTATN) the chain is Cytoplasmic. Residues 85–106 (IYIFNLALADTLVLLTLPFQGT) traverse the membrane as a helical segment. At 107–121 (DILLGFWPFGNALCK) the chain is on the extracellular side. C120 and C197 form a disulfide bridge. The helical transmembrane segment at 122 to 143 (TVIAIDYYNMFTSTFTLTAMSV) threads the bilayer. At 144–162 (DRYVAICHPIRALDVRTSS) the chain is on the cytoplasmic side. A helical transmembrane segment spans residues 163–185 (KAQAVNVAIWALASVVGVPVAIM). Residues 186 to 208 (GSAQVEDEEIECLVEIPAPQDYW) lie on the Extracellular side of the membrane. The helical transmembrane segment at 209 to 233 (GPVFAICIFLFSFIIPVLIISVCYS) threads the bilayer. The Cytoplasmic portion of the chain corresponds to 234–261 (LMIRRLRGVRLLSGSREKDRNLRRITRL). The chain crosses the membrane as a helical span at residues 262 to 282 (VLVVVAVFVGCWTPVQVFVLV). Residues 283 to 297 (QGLGVQPGSETAVAI) lie on the Extracellular side of the membrane. The chain crosses the membrane as a helical span at residues 298 to 319 (LRFCTALGYVNSCLNPILYAFL). Residues 320-367 (DENFKACFRKFCCASALHREMQVSDRVRSIAKDVGLGCKTSETVPRPA) are Cytoplasmic-facing. The S-palmitoyl cysteine moiety is linked to residue C331.

Belongs to the G-protein coupled receptor 1 family. In terms of processing, phosphorylation at Ser-360 requires GRK3. In terms of tissue distribution, in the brain, isoform KOR3 and isoform KOR3C are most abundant in hypothalamus and periaqueductal gray. Isoform KOR3A is highly expressed in cortex, striatum and brainstem. Isoform KOR3D is highly expressed in cerebellum, hypothalamus and brainstem. Detected in spleen lymphocytes.

The protein resides in the cell membrane. It localises to the cytoplasmic vesicle. Functionally, G-protein coupled opioid receptor that functions as a receptor for the endogenous neuropeptide nociceptin. Ligand binding causes a conformation change that triggers signaling via guanine nucleotide-binding proteins (G proteins) and modulates the activity of down-stream effectors. Signaling via G proteins mediates inhibition of adenylate cyclase activity and calcium channel activity. Arrestins modulate signaling via G proteins and mediate the activation of alternative signaling pathways that lead to the activation of MAP kinases. Plays a role in modulating nociception and the perception of pain. Plays a role in the regulation of locomotor activity by the neuropeptide nociceptin. In Mus musculus (Mouse), this protein is Nociceptin receptor (Oprl1).